Here is a 212-residue protein sequence, read N- to C-terminus: High frequency lysogenization protein HflD homolog (212 aa).

Residues 92 to 128 (LIALERKLNAKSAALDELGKRIGQLERQLEHFELLSE) are a coiled coil.

It belongs to the HflD family.

The protein localises to the cytoplasm. It is found in the cell inner membrane. This is High frequency lysogenization protein HflD homolog from Pectobacterium atrosepticum (strain SCRI 1043 / ATCC BAA-672) (Erwinia carotovora subsp. atroseptica).